The sequence spans 258 residues: Phosphate import ATP-binding protein PstB (258 aa).

The ABC transporter domain occupies 12–253 (LEVKNLNFYY…PARKETEDYI (242 aa)). 44-51 (GPSGCGKS) lines the ATP pocket.

Belongs to the ABC transporter superfamily. Phosphate importer (TC 3.A.1.7) family. The complex is composed of two ATP-binding proteins (PstB), two transmembrane proteins (PstC and PstA) and a solute-binding protein (PstS).

The protein localises to the cell inner membrane. The enzyme catalyses phosphate(out) + ATP + H2O = ADP + 2 phosphate(in) + H(+). Functionally, part of the ABC transporter complex PstSACB involved in phosphate import. Responsible for energy coupling to the transport system. This is Phosphate import ATP-binding protein PstB from Bordetella parapertussis (strain 12822 / ATCC BAA-587 / NCTC 13253).